The chain runs to 152 residues: Nucleoside diphosphate kinase (152 aa).

6 residues coordinate ATP: K11, F59, R87, T93, R104, and N114. H117 (pros-phosphohistidine intermediate) is an active-site residue.

Belongs to the NDK family. In terms of assembly, homotetramer. Mg(2+) is required as a cofactor.

Its subcellular location is the cytoplasm. The enzyme catalyses a 2'-deoxyribonucleoside 5'-diphosphate + ATP = a 2'-deoxyribonucleoside 5'-triphosphate + ADP. The catalysed reaction is a ribonucleoside 5'-diphosphate + ATP = a ribonucleoside 5'-triphosphate + ADP. Its function is as follows. Major role in the synthesis of nucleoside triphosphates other than ATP. The ATP gamma phosphate is transferred to the NDP beta phosphate via a ping-pong mechanism, using a phosphorylated active-site intermediate. This is Nucleoside diphosphate kinase from Prochlorococcus marinus (strain MIT 9303).